Here is a 111-residue protein sequence, read N- to C-terminus: MIWLTLVFASLLSVAGQLCQKQATCFVAISKRRKHIVLWLGLALACLGLAMVLWLLVLQNVPVGIAYPMLSLNFVWVTLAAVKLWHEPVSPRHWCGVAFIIGGIVILGSTV.

The Cytoplasmic segment spans residues Met-1–His-35. A helical membrane pass occupies residues Ile-36–Leu-56. Residues Leu-40 to Ser-109 form the EamA domain. The Periplasmic segment spans residues Val-57 to Asn-60. Residues Val-61–Ala-81 form a helical membrane-spanning segment. Topologically, residues Val-82 to Glu-87 are cytoplasmic. A helical membrane pass occupies residues Pro-88 to Gly-108. The Periplasmic portion of the chain corresponds to Ser-109–Val-111.

This sequence belongs to the ArnE family. Heterodimer of ArnE and ArnF.

The protein resides in the cell inner membrane. Its pathway is bacterial outer membrane biogenesis; lipopolysaccharide biosynthesis. Translocates 4-amino-4-deoxy-L-arabinose-phosphoundecaprenol (alpha-L-Ara4N-phosphoundecaprenol) from the cytoplasmic to the periplasmic side of the inner membrane. The chain is Probable 4-amino-4-deoxy-L-arabinose-phosphoundecaprenol flippase subunit ArnE from Escherichia coli O157:H7.